The sequence spans 597 residues: Myrcene synthase, chloroplastic (597 aa).

A chloroplast-targeting transit peptide spans 1–56 (MALKLLTSLPMYNFSRVPVSSKDPILLVTSRTRNGYLARPVQCMVANKVSTSPDIL). Arg310, Asp347, Asp351, Arg488, and Asp491 together coordinate (2E)-geranyl diphosphate. Mg(2+) contacts are provided by Asp347 and Asp351. Residues 347–351 (DDVYD) carry the DDXXD motif motif. Positions 491, 495, and 499 each coordinate Mg(2+).

It belongs to the terpene synthase family. Tpsb subfamily. The cofactor is Mg(2+). Mn(2+) is required as a cofactor.

It localises to the plastid. It is found in the chloroplast. The enzyme catalyses (2E)-geranyl diphosphate = beta-myrcene + diphosphate. Involved in monoterpene (C10) biosynthesis. The major product is myrcene followed by minor amounts (1.2%) of the cyclic monoterpene limonene. This is Myrcene synthase, chloroplastic from Quercus ilex (Holly oak).